We begin with the raw amino-acid sequence, 83 residues long: Bublin coiled-coil protein (83 aa).

The interval 1 to 25 (MSGPNGDLGTPVEAGAEGEEDGFGE) is disordered. The stretch at 25–74 (EAEYAAINSMLDQINSCLDHLEEKNDHLHARLQELLESNRQTRLEFQQQL) forms a coiled coil. Serine 82 bears the Phosphoserine mark.

Belongs to the UPF0184 (EST00098) family.

The protein resides in the cell junction. It localises to the cytoplasm. The protein localises to the cytoskeleton. In terms of biological role, essential for intermediate filament organization in intestinal cells, interacts with intermediate filament and regulates intestinal lumen morphology. This is Bublin coiled-coil protein (BBLN) from Bos taurus (Bovine).